Here is a 333-residue protein sequence, read N- to C-terminus: Cytochrome f (333 aa).

The first 16 residues, 1 to 16 (MRNVFRTARLTRSARA), serve as a signal peptide directing secretion. The helical transmembrane segment at 17-36 (IVKTLLIAIATVTFYFTSDL) threads the bilayer. Positions 45, 66, 69, and 70 each coordinate heme. Residues 299–319 (VKWMIAFVALVMLAQVMLVLK) form a helical membrane-spanning segment.

This sequence belongs to the cytochrome f family. As to quaternary structure, the 4 large subunits of the cytochrome b6-f complex are cytochrome b6, subunit IV (17 kDa polypeptide, PetD), cytochrome f and the Rieske protein, while the 4 small subunits are PetG, PetL, PetM and PetN. The complex functions as a dimer. Requires heme as cofactor.

It is found in the cellular thylakoid membrane. Its function is as follows. Component of the cytochrome b6-f complex, which mediates electron transfer between photosystem II (PSII) and photosystem I (PSI), cyclic electron flow around PSI, and state transitions. The sequence is that of Cytochrome f from Nostoc punctiforme (strain ATCC 29133 / PCC 73102).